A 294-amino-acid chain; its full sequence is Bifunctional protein FolD (294 aa).

NADP(+)-binding positions include 175–177 (GAS) and Ile-241.

It belongs to the tetrahydrofolate dehydrogenase/cyclohydrolase family. Homodimer.

It carries out the reaction (6R)-5,10-methylene-5,6,7,8-tetrahydrofolate + NADP(+) = (6R)-5,10-methenyltetrahydrofolate + NADPH. The enzyme catalyses (6R)-5,10-methenyltetrahydrofolate + H2O = (6R)-10-formyltetrahydrofolate + H(+). Its pathway is one-carbon metabolism; tetrahydrofolate interconversion. Catalyzes the oxidation of 5,10-methylenetetrahydrofolate to 5,10-methenyltetrahydrofolate and then the hydrolysis of 5,10-methenyltetrahydrofolate to 10-formyltetrahydrofolate. The polypeptide is Bifunctional protein FolD (Hahella chejuensis (strain KCTC 2396)).